Reading from the N-terminus, the 179-residue chain is Large ribosomal subunit protein uL5 (179 aa).

It belongs to the universal ribosomal protein uL5 family. In terms of assembly, part of the 50S ribosomal subunit; part of the 5S rRNA/L5/L18/L25 subcomplex. Contacts the 5S rRNA and the P site tRNA. Forms a bridge to the 30S subunit in the 70S ribosome.

In terms of biological role, this is one of the proteins that bind and probably mediate the attachment of the 5S RNA into the large ribosomal subunit, where it forms part of the central protuberance. In the 70S ribosome it contacts protein S13 of the 30S subunit (bridge B1b), connecting the 2 subunits; this bridge is implicated in subunit movement. Contacts the P site tRNA; the 5S rRNA and some of its associated proteins might help stabilize positioning of ribosome-bound tRNAs. The polypeptide is Large ribosomal subunit protein uL5 (Pseudomonas putida (strain W619)).